An 851-amino-acid polypeptide reads, in one-letter code: Glycogen phosphorylase, liver form (851 aa).

A2 is modified (N-acetylalanine). The residue at position 15 (S15) is a Phosphoserine; by PHK; in form phosphorylase a. Residues 43–45, Y76, and R310 each bind AMP; that span reads DRN. At K364 the chain carries N6-succinyllysine. K470 is modified (N6-acetyllysine). Phosphoserine occurs at positions 524, 561, and 639. N6-(pyridoxal phosphate)lysine is present on K681. K796 carries the post-translational modification N6-acetyllysine.

It belongs to the glycogen phosphorylase family. As to quaternary structure, homodimer; enzymatically active. Interacts with PPP1R3B; recruits the phosphatase PP1 which dephosphorylates and inactivates PYGL/glycogen phosphorylase. Pyridoxal 5'-phosphate serves as cofactor. Post-translationally, acetylation, which is up-regulated by glucose and insulin and down-regulated by glucagon, inhibits the glycogen phosphorylase activity by promoting PPP1R3B-mediated recruitment of phosphatase PP1 and Ser-15 dephosphorylation. Phosphorylation at Ser-15 converts inactive phosphorylase b into active phosphorylase a. Dephosphorylation of Ser-15 by phosphatase PP1 inactivates the enzyme.

Its subcellular location is the cytoplasm. The protein localises to the cytosol. The catalysed reaction is [(1-&gt;4)-alpha-D-glucosyl](n) + phosphate = [(1-&gt;4)-alpha-D-glucosyl](n-1) + alpha-D-glucose 1-phosphate. Allosterically regulated through the non-covalent binding of metabolites, being activated by AMP and inhibited by ATP, ADP, and glucose-6-phosphate. The activity is also controlled by post-translational modifications including phosphorylation and acetylation. Its function is as follows. Allosteric enzyme that catalyzes the rate-limiting step in glycogen catabolism, the phosphorolytic cleavage of glycogen to produce glucose-1-phosphate, and plays a central role in maintaining cellular and organismal glucose homeostasis. This is Glycogen phosphorylase, liver form from Bos taurus (Bovine).